The following is a 161-amino-acid chain: Protein ilm1 (161 aa).

Over 1–6 (MLFSFR) the chain is Cytoplasmic. The helical transmembrane segment at 7–27 (AIVLFYCCMLTFAGIGFLWNP) threads the bilayer. Residues 28 to 56 (KFVVESGLVALIGASMEVKPLIVTQDNLS) are Lumenal-facing. The helical transmembrane segment at 57–77 (TLALSGLVFLILGMIYTISLL) threads the bilayer. Topologically, residues 78 to 81 (QSNF) are cytoplasmic. The chain crosses the membrane as a helical span at residues 82-102 (LFFSGITPIRAIFDFILTGFI). Over 103 to 112 (YLKKEHIASN) the chain is Lumenal. Residues 113 to 133 (SLTFTFAFCDLMWQFWMFAAM) form a helical membrane-spanning segment. Residues 134-161 (SEERAKYLKNQKKAEELAARKAREVEES) lie on the Cytoplasmic side of the membrane.

This sequence belongs to the ILM1 family.

Its subcellular location is the endoplasmic reticulum. The protein localises to the membrane. This is Protein ilm1 from Schizosaccharomyces pombe (strain 972 / ATCC 24843) (Fission yeast).